A 476-amino-acid chain; its full sequence is Fatty acid hydroperoxide lyase, chloroplastic (476 aa).

The helical transmembrane segment at Leu-280–Leu-300 threads the bilayer. A heme-binding site is contributed by Cys-438.

The protein belongs to the cytochrome P450 family. Heme serves as cofactor. Highly expressed in developing flowers and in young leaves. Detected in stems and immature green fruits, but not in mature green and red fruits.

Its subcellular location is the plastid. It is found in the chloroplast outer membrane. Reversibly inhibited by nordihydroguaiaretic acid (NDGA) and irreversibly by salicylic acid. Cytochrome P450 of the CYP74B subfamily involved in the biosynthesis of traumatin and C6 aldehydes. Metabolizes 13- but not 9-hydroperoxides of linoleic and linolenic acids. Can use 15S-hydroperoxy-11(Z),13(E),17(Z)-eicosatrienoic acid (15-HPET) and 13S-hydroperoxy-9(Z),11(E),15(Z)-octadecatrienoic acid (13-HPOT) as substrates, but only 5% activity with 13S-hydroperoxy-9(Z),11(E)-octadecadienoic acid (13-HPOD). Produces n-hexanal and 12-oxo-9(Z)-dodecanoic acid from 13-HPOD. The chain is Fatty acid hydroperoxide lyase, chloroplastic from Solanum lycopersicum (Tomato).